Reading from the N-terminus, the 101-residue chain is Small ribosomal subunit protein uS14 (101 aa).

Belongs to the universal ribosomal protein uS14 family. Part of the 30S ribosomal subunit. Contacts proteins S3 and S10.

Binds 16S rRNA, required for the assembly of 30S particles and may also be responsible for determining the conformation of the 16S rRNA at the A site. The polypeptide is Small ribosomal subunit protein uS14 (Orientia tsutsugamushi (strain Ikeda) (Rickettsia tsutsugamushi)).